The primary structure comprises 917 residues: Auxin response factor 17 (917 aa).

Positions 134-236 (FCKTLTASDT…QLLLGIRRAN (103 aa)) form a DNA-binding region, TF-B3. The interval 571–649 (SVPNALSPFS…RPTAVPVPDP (79 aa)) is disordered. Low complexity-rich tracts occupy residues 576–594 (LSPF…MTLQ) and 604–620 (SYPD…NTST). The PB1 domain maps to 786–870 (ATFVKVYKSG…SCIKILSPQE (85 aa)).

The protein belongs to the ARF family. As to quaternary structure, homodimers and heterodimers.

Its subcellular location is the nucleus. Functionally, auxin response factors (ARFs) are transcriptional factors that bind specifically to the DNA sequence 5'-TGTCTC-3' found in the auxin-responsive promoter elements (AuxREs). The sequence is that of Auxin response factor 17 (ARF17) from Oryza sativa subsp. indica (Rice).